The sequence spans 874 residues: MANNTTSALHPRGSGQRCVYDTVLRFGDPDARRRGFQLDEVSHNKLCDIFDSGPLHFAFGDLKVMKVAGGVVTPHKTVVKTVYVSGVQEGNDYVTFAFTPGPNEWREVDPRIDKRTALVGVLVQEHKKLDSDLKESRRELSQLKLEHSLLRHDYERLVREKPGPAMRTFKFSAVIFYAFFLGFLLMSAVKGEVYGRCLDSELNLNGNPEVCLHWEEVKSFSLQVALADFWNMTLDYYATVAPQSPLMDLALGYFPYFANWHMAAFLVGTAHVVAAERPLYMLVTLVLATLSRFQLVALAAVPMLDMPSSIGLWVTMVLFAIDQAFAILASVLISVLLLILCLAMNDVDYGALLRGCVTLVSATVFSHLVSFLHAPGWFTIIAILIYRIPKVLSYVSAERVDIKGPDGKIKETQNANPSWITKMSGLKNFFQRAFRQKVRTGVNPTTRIIPNSLVVIDAKDGRGTGFRVRNYLVTAGHVVGADTTVRVRWADVTSFAHVVYRVPNKDIVLLTLPAEYNSLHSYKLAKEVVDGTVVVVSNGDGGALSVGISEGVIVGESMTYAINTADGMSGSPLTTTDGRLIGVHQQNTGFTGGAVIFRDTDFPQPKKPQREADLEAKVAELEKALAAYTQSATGEDIVGLVRVAIQREMEVLRKELSNEFGQAKGKTKHKRRIMAAARSGGKRKPGKVWTEEEYKKLLEEGFTRDQLREMAEAAREADDDFDDYEEEKNEVDYPVWSDHDSDEEIDRDWFGQNLPTWSSAWSDFEPELDPDVTKTLPCHLEDKFSLKHYIITEADLKHFGQEMKEYMDHLDAVIKTHTEKGKWCPNTNTEEILKDLNAMWFKLNHTMWKNGVAPFMQRKKQKPKNGKRAPKGAQ.

A run of 4 helical transmembrane segments spans residues 249–269, 279–299, 324–344, and 365–385; these read LALG…LVGT, LYML…VALA, AFAI…CLAM, and FSHL…AILI. Catalysis depends on charge relay system; for serine protease activity residues His477, Asp506, and Ser569. Position 694 is an O-(5'-phospho-RNA)-tyrosine (Tyr694). The tract at residues 855 to 874 is disordered; it reads FMQRKKQKPKNGKRAPKGAQ. Positions 857–874 are enriched in basic residues; it reads QRKKQKPKNGKRAPKGAQ.

Belongs to the astroviridae polyprotein 1A family. In terms of assembly, monomer. Cleaved by the viral and host proteases. The protease is probably autocatalytically cleaved.

The protein resides in the host membrane. The enzyme catalyses RNA(n) + a ribonucleoside 5'-triphosphate = RNA(n+1) + diphosphate. Functionally, responsible for the cleavage of the polyprotein into functional products. Protein covalently attached to the 5' extremity of the genomic and subgenomic RNAs. It may serve as a primer for the replicase. The chain is Non-structural polyprotein 1A (ORF1) from Mink astrovirus 1 (MAstV-1).